We begin with the raw amino-acid sequence, 994 residues long: Probable beta-galactosidase C (994 aa).

The N-terminal stretch at Met-1–Ala-19 is a signal peptide. Tyr-78 lines the substrate pocket. Asn-88 carries N-linked (GlcNAc...) asparagine glycosylation. Residues Asn-123, Ala-124, Glu-125, and Asn-183 each coordinate substrate. Glu-184 functions as the Proton donor in the catalytic mechanism. Residue Tyr-247 participates in substrate binding. A disulfide bridge links Cys-253 with Cys-301. Asn-272 carries N-linked (GlcNAc...) asparagine glycosylation. Residue Glu-283 is the Nucleophile of the active site. Tyr-350 contacts substrate. Residues Asn-388, Asn-407, Asn-433, Asn-500, Asn-514, Asn-521, Asn-584, Asn-600, Asn-674, Asn-712, Asn-717, Asn-757, Asn-861, and Asn-969 are each glycosylated (N-linked (GlcNAc...) asparagine).

It belongs to the glycosyl hydrolase 35 family.

The protein resides in the secreted. It carries out the reaction Hydrolysis of terminal non-reducing beta-D-galactose residues in beta-D-galactosides.. Functionally, cleaves beta-linked terminal galactosyl residues from gangliosides, glycoproteins, and glycosaminoglycans. This is Probable beta-galactosidase C (lacC) from Aspergillus niger (strain ATCC MYA-4892 / CBS 513.88 / FGSC A1513).